Here is a 98-residue protein sequence, read N- to C-terminus: Complement inhibitor RaCI2 (98 aa).

Positions 1 to 21 (MNAVTVLAFTAFALIVHDCYS) are cleaved as a signal peptide. Cystine bridges form between Cys35–Cys59, Cys40–Cys61, and Cys55–Cys76.

This sequence belongs to the RaCI family. Expressed in salivary glands.

It localises to the secreted. Functionally, complement inhibitor. Prevents complement-mediated C5 activation by binding to C5. Binds C5 at a different binding site than the other tick complement inhibitors OmCI and CirpT1, and the drug eculizumab. This Rhipicephalus microplus (Cattle tick) protein is Complement inhibitor RaCI2.